We begin with the raw amino-acid sequence, 429 residues long: UPF0597 protein AHA_1619 (429 aa).

Belongs to the UPF0597 family.

The protein is UPF0597 protein AHA_1619 of Aeromonas hydrophila subsp. hydrophila (strain ATCC 7966 / DSM 30187 / BCRC 13018 / CCUG 14551 / JCM 1027 / KCTC 2358 / NCIMB 9240 / NCTC 8049).